The chain runs to 604 residues: NRPS-independent siderophore synthetase-like protein ankE (604 aa).

It catalyses the reaction cyclo(L-arginyl-(Z)-dehydro-4-O-homoseryl-tyrosyl) + citrate + ATP = NK13650 B + AMP + diphosphate + H(+). Its pathway is secondary metabolite biosynthesis. Its function is as follows. NRPS-independent siderophore synthetase-like protein; part of the ank cluster that mediates the biosynthesis of NK13650 C, a highly modified cyclo-arginine-tyrosine dipeptide. AnkE is responsible of the production of NK13650 B via ligation of citrate to the ankD product. Within the pathway, the cyclodipeptide synthase ankA acts as the scaffold-generating enzyme and is responsible for formation of the cyclo-Arg-Tyr diketopiperazine (cRY) from L-Arg and L-Tyr. The ankA product cRY is desaturated by the cytochrome P450 monooxygenase ankB to yield a dehydro-cyclodipeptide intermediate. The FAD-dependent monooxygenase ankC then installs the m-OH, ankD catalyzes the attachment of L-homoserine, and ankE ligates citrate to the ankD product to yield NK13650 B. The O-methyltransferase ankF is responsible for methylation of the C-17 phenol group of NK13650 B to produce NK13650 D. Amidation of NK13650 D with L-Asp by ankG then leads to the production of NK13650 C, whereas amidation of NK13650 B produces NK13650 A. The polypeptide is NRPS-independent siderophore synthetase-like protein ankE (Aspergillus thermomutatus (Neosartorya pseudofischeri)).